We begin with the raw amino-acid sequence, 246 residues long: 3-deoxy-manno-octulosonate cytidylyltransferase (246 aa).

It belongs to the KdsB family.

Its subcellular location is the cytoplasm. The enzyme catalyses 3-deoxy-alpha-D-manno-oct-2-ulosonate + CTP = CMP-3-deoxy-beta-D-manno-octulosonate + diphosphate. It functions in the pathway nucleotide-sugar biosynthesis; CMP-3-deoxy-D-manno-octulosonate biosynthesis; CMP-3-deoxy-D-manno-octulosonate from 3-deoxy-D-manno-octulosonate and CTP: step 1/1. The protein operates within bacterial outer membrane biogenesis; lipopolysaccharide biosynthesis. Functionally, activates KDO (a required 8-carbon sugar) for incorporation into bacterial lipopolysaccharide in Gram-negative bacteria. The polypeptide is 3-deoxy-manno-octulosonate cytidylyltransferase (Bradyrhizobium sp. (strain ORS 278)).